We begin with the raw amino-acid sequence, 188 residues long: dCTP deaminase (188 aa).

DCTP contacts are provided by residues 111–116 (KSTYAR), 135–137 (TLE), Gln156, Tyr170, and Gln180. Glu137 acts as the Proton donor/acceptor in catalysis.

This sequence belongs to the dCTP deaminase family. As to quaternary structure, homotrimer.

It catalyses the reaction dCTP + H2O + H(+) = dUTP + NH4(+). It participates in pyrimidine metabolism; dUMP biosynthesis; dUMP from dCTP (dUTP route): step 1/2. In terms of biological role, catalyzes the deamination of dCTP to dUTP. This Azotobacter vinelandii (strain DJ / ATCC BAA-1303) protein is dCTP deaminase.